A 352-amino-acid polypeptide reads, in one-letter code: DNA ADP-ribosyl glycohydrolase (352 aa).

The 155-residue stretch at 1 to 155 folds into the Macro domain; the sequence is MITYGSGDLL…IYPPSGGSRA (155 aa). ADP-D-ribose-binding positions include 8 to 9, 20 to 22, 31 to 34, and Thr79; these read DL, TVN, and IALQ. Lys80 serves as the catalytic Nucleophile. 117–121 is a binding site for ADP-D-ribose; the sequence is GVGNG. Residues 164-352 are interaction with DarT; it reads MTWGRAVILE…VALDRILMTA (189 aa).

It belongs to the DarG ADP-ribosyl glycohydrolase family. As to quaternary structure, interacts (via C-terminus) with cognate toxin DarT; this heterodimeric complex neutralizes the toxic effect of DarT by preventing ssDNA binding to DarT and consequently inactivating the toxin by direct protein-protein interactions.

It catalyses the reaction an N-(ADP-alpha-D-ribosyl)-thymidine in DNA + H2O = a thymidine in DNA + ADP-D-ribose. Its function is as follows. Antitoxin component of the hybrid type II/IV toxin-antitoxin (TA) system DarTG, which plays a crucial role in controlling bacterial growth and bacteriophage infection. De-ADP-ribosylates DNA (probably) modified on thymidine by its cognate toxin DarT, which neutralizes the activity of cognate toxin DarT. The protein is DNA ADP-ribosyl glycohydrolase of Mycobacterium bovis (strain BCG / Pasteur 1173P2).